A 324-amino-acid chain; its full sequence is NADH-ubiquinone oxidoreductase chain 1 (324 aa).

8 helical membrane passes run 10–30 (MIMT…LTLV), 76–96 (FLFI…WTPL), 107–127 (LGLL…LWSG), 143–163 (VAQT…TIML), 178–198 (PMYL…STLA), 229–249 (LFFL…ITLF), 260–280 (ELFS…FLWI), and 300–320 (FLPL…SYAG).

Belongs to the complex I subunit 1 family.

The protein localises to the mitochondrion inner membrane. It catalyses the reaction a ubiquinone + NADH + 5 H(+)(in) = a ubiquinol + NAD(+) + 4 H(+)(out). Functionally, core subunit of the mitochondrial membrane respiratory chain NADH dehydrogenase (Complex I) that is believed to belong to the minimal assembly required for catalysis. Complex I functions in the transfer of electrons from NADH to the respiratory chain. The immediate electron acceptor for the enzyme is believed to be ubiquinone. This is NADH-ubiquinone oxidoreductase chain 1 (MT-ND1) from Coturnix japonica (Japanese quail).